The primary structure comprises 431 residues: Metal-binding activator 1 (431 aa).

A DNA-binding region (copper-fist) is located at residues 1–40; that stretch reads MILIDDIKYACMECVRGHRSSSCKHHERPLLQVRSKGRPG. Zn(2+) is bound by residues C11, C14, C23, and H25.

The protein localises to the nucleus. Its function is as follows. Copper ion-sensing transcription factor which activates transcription of the CTR1 copper transporter under low-copper conditions. Promotes filamentous and invasive growth. In Candida albicans (strain SC5314 / ATCC MYA-2876) (Yeast), this protein is Metal-binding activator 1 (MAC1).